The chain runs to 251 residues: Fibroblast growth factor 23 (251 aa).

A signal peptide spans Met-1–Ala-24. Cys-95 and Cys-113 form a disulfide bridge. 2 O-linked (GalNAc) threonine glycosylation sites follow: Thr-171 and Thr-178. Residues Pro-172 to Ser-221 are disordered. Phosphoserine; by FAM20C is present on Ser-180. Polar residues predominate over residues Ser-205 to Met-219.

Belongs to the heparin-binding growth factors family. As to quaternary structure, interacts with FGFR1, FGFR2, FGFR3 and FGFR4. Affinity between fibroblast growth factors (FGFs) and their receptors is increased by KL and heparan sulfate glycosaminoglycans that function as coreceptors. Post-translationally, following secretion this protein is inactivated by cleavage into a N-terminal fragment and a C-terminal fragment. The processing is effected by proprotein convertases. In terms of processing, O-glycosylated at Thr-171 and Thr-178 by GALNT3 and glycosylation of Thr-178 requires previous glycosylation at Thr171. Glycosylation is necessary for secretion; it blocks processing by proprotein convertases when the O-glycan is alpha 2,6-sialylated. Competition between proprotein convertase cleavage and block of cleavage by O-glycosylation determines the level of secreted active FGF23. Phosphorylation at Ser-180 mediated by FAM20C slows down glycosylation at Thr-178 notably. As to expression, expressed in osteogenic cells particularly during phases of active bone remodeling. In adult trabecular bone, expressed in osteocytes and flattened bone-lining cells (inactive osteoblasts).

The protein localises to the secreted. In terms of biological role, regulator of phosphate homeostasis. Inhibits renal tubular phosphate transport by reducing SLC34A1 levels. Up-regulates EGR1 expression in the presence of KL. Acts directly on the parathyroid to decrease PTH secretion. Regulator of vitamin-D metabolism. Negatively regulates osteoblast differentiation and matrix mineralization. This Homo sapiens (Human) protein is Fibroblast growth factor 23 (FGF23).